Consider the following 149-residue polypeptide: uncharacterized protein (149 aa).

This sequence to B.subtilis XkdN.

This is an uncharacterized protein from Bacillus subtilis (strain 168).